The chain runs to 184 residues: ATP-dependent protease subunit HslV (184 aa).

The active site involves T12. Na(+) is bound by residues A166, C169, and T172.

This sequence belongs to the peptidase T1B family. HslV subfamily. In terms of assembly, a double ring-shaped homohexamer of HslV is capped on each side by a ring-shaped HslU homohexamer. The assembly of the HslU/HslV complex is dependent on binding of ATP.

Its subcellular location is the cytoplasm. It catalyses the reaction ATP-dependent cleavage of peptide bonds with broad specificity.. Allosterically activated by HslU binding. Its function is as follows. Protease subunit of a proteasome-like degradation complex believed to be a general protein degrading machinery. The polypeptide is ATP-dependent protease subunit HslV (Brucella melitensis biotype 1 (strain ATCC 23456 / CCUG 17765 / NCTC 10094 / 16M)).